Consider the following 393-residue polypeptide: Phosphoglycerate kinase (393 aa).

Substrate is bound by residues 21–23 (DLN), arginine 36, 59–62 (HLGR), arginine 113, and arginine 146. Residues lysine 197, glutamate 319, and 345 to 348 (GGDT) each bind ATP.

It belongs to the phosphoglycerate kinase family. In terms of assembly, monomer.

It is found in the cytoplasm. It catalyses the reaction (2R)-3-phosphoglycerate + ATP = (2R)-3-phospho-glyceroyl phosphate + ADP. It participates in carbohydrate degradation; glycolysis; pyruvate from D-glyceraldehyde 3-phosphate: step 2/5. The polypeptide is Phosphoglycerate kinase (Nitratidesulfovibrio vulgaris (strain ATCC 29579 / DSM 644 / CCUG 34227 / NCIMB 8303 / VKM B-1760 / Hildenborough) (Desulfovibrio vulgaris)).